The chain runs to 475 residues: Trifunctional enzyme subunit beta, mitochondrial (475 aa).

Residues 1–34 (MTTILTYPFKNLPTASKWALRFSIRPLSCSSQLR) constitute a mitochondrion transit peptide. Position 73 is an N6-acetyllysine; alternate (Lys-73). Lys-73 bears the N6-succinyllysine; alternate mark. Cys-139 acts as the Acyl-thioester intermediate in catalysis. The stretch at 174 to 221 (IRHSRKMRKLMLDLNKAKSMGQRLSLISKFRFNFLAPELPAVSEFSTS) is an intramembrane region. Lys-189 carries the post-translational modification N6-acetyllysine; alternate. The residue at position 189 (Lys-189) is an N6-succinyllysine; alternate. Residues Lys-191, Lys-273, and Lys-292 each carry the N6-succinyllysine modification. The residue at position 294 (Lys-294) is an N6-acetyllysine; alternate. Lys-294 carries the N6-succinyllysine; alternate modification. At Lys-299 the chain carries N6-acetyllysine. Lys-333 carries the post-translational modification N6-acetyllysine; alternate. The residue at position 333 (Lys-333) is an N6-succinyllysine; alternate. Residues Lys-349 and Lys-362 each carry the N6-acetyllysine modification. The Proton donor/acceptor role is filled by Cys-459.

This sequence belongs to the thiolase-like superfamily. Thiolase family. In terms of assembly, heterotetramer of 2 alpha/HADHA and 2 beta/HADHB subunits; forms the mitochondrial trifunctional enzyme. Also purified as higher order heterooligomers including a 4 alpha/HADHA and 4 beta/HADHB heterooligomer which physiological significance remains unclear. The mitochondrial trifunctional enzyme interacts with MTLN. Interacts with RSAD2/viperin.

Its subcellular location is the mitochondrion. It is found in the mitochondrion inner membrane. It localises to the mitochondrion outer membrane. The protein localises to the endoplasmic reticulum. It catalyses the reaction an acyl-CoA + acetyl-CoA = a 3-oxoacyl-CoA + CoA. The catalysed reaction is butanoyl-CoA + acetyl-CoA = 3-oxohexanoyl-CoA + CoA. It carries out the reaction hexanoyl-CoA + acetyl-CoA = 3-oxooctanoyl-CoA + CoA. The enzyme catalyses octanoyl-CoA + acetyl-CoA = 3-oxodecanoyl-CoA + CoA. It catalyses the reaction decanoyl-CoA + acetyl-CoA = 3-oxododecanoyl-CoA + CoA. The catalysed reaction is dodecanoyl-CoA + acetyl-CoA = 3-oxotetradecanoyl-CoA + CoA. It carries out the reaction tetradecanoyl-CoA + acetyl-CoA = 3-oxohexadecanoyl-CoA + CoA. The protein operates within lipid metabolism; fatty acid beta-oxidation. In terms of biological role, mitochondrial trifunctional enzyme catalyzes the last three of the four reactions of the mitochondrial beta-oxidation pathway. The mitochondrial beta-oxidation pathway is the major energy-producing process in tissues and is performed through four consecutive reactions breaking down fatty acids into acetyl-CoA. Among the enzymes involved in this pathway, the trifunctional enzyme exhibits specificity for long-chain fatty acids. Mitochondrial trifunctional enzyme is a heterotetrameric complex composed of two proteins, the trifunctional enzyme subunit alpha/HADHA carries the 2,3-enoyl-CoA hydratase and the 3-hydroxyacyl-CoA dehydrogenase activities, while the trifunctional enzyme subunit beta/HADHB described here bears the 3-ketoacyl-CoA thiolase activity. In Pan troglodytes (Chimpanzee), this protein is Trifunctional enzyme subunit beta, mitochondrial (HADHB).